The primary structure comprises 215 residues: Cytidylate kinase (215 aa).

10–18 (GPAASGKGT) provides a ligand contact to ATP.

Belongs to the cytidylate kinase family. Type 1 subfamily.

The protein localises to the cytoplasm. The enzyme catalyses CMP + ATP = CDP + ADP. The catalysed reaction is dCMP + ATP = dCDP + ADP. This is Cytidylate kinase from Bartonella henselae (strain ATCC 49882 / DSM 28221 / CCUG 30454 / Houston 1) (Rochalimaea henselae).